Here is a 60-residue protein sequence, read N- to C-terminus: Potassium channel toxin alpha-KTx 15.9 (60 aa).

Residues 1 to 22 form the signal peptide; sequence MKIFLPVLVMLILCSMCLLTEG. Disulfide bonds link cysteine 30–cysteine 51, cysteine 36–cysteine 56, and cysteine 40–cysteine 58.

The protein belongs to the short scorpion toxin superfamily. Potassium channel inhibitor family. Alpha-KTx 15 subfamily. In terms of tissue distribution, expressed by the venom gland.

The protein localises to the secreted. In terms of biological role, blocker of A-type voltage-gated potassium channels of cerebellar granular cells. May also inhibit Kv4/KCND when coexpressed with DPP6 or DPP10. The occlusion of the outer entry of the K(+) conducting pore is partially reversible and affects both open and closed channels. It shares the same target in rat brain than BmTX3 (AC Q8I0L5) and AmmTX3 (AC P60208). Has been shown to weakly inhibit TRPV1 channels. This is Potassium channel toxin alpha-KTx 15.9 from Lychas mucronatus (Chinese swimming scorpion).